A 222-amino-acid chain; its full sequence is Cytochrome b6 (222 aa).

Residues 39–59 form a helical membrane-spanning segment; the sequence is IFYCLGGITLTCFLIQFATGF. Cys42 contacts heme c. His93 and His107 together coordinate heme b. The next 3 helical transmembrane spans lie at 97–117, 123–143, and 193–213; these read ASMM…TGGF, LTWV…VTGY, and LHTF…FLMI. Residues His194 and His209 each contribute to the heme b site.

This sequence belongs to the cytochrome b family. PetB subfamily. As to quaternary structure, the 4 large subunits of the cytochrome b6-f complex are cytochrome b6, subunit IV (17 kDa polypeptide, PetD), cytochrome f and the Rieske protein, while the 4 small subunits are PetG, PetL, PetM and PetN. The complex functions as a dimer. It depends on heme b as a cofactor. The cofactor is heme c.

It is found in the cellular thylakoid membrane. Functionally, component of the cytochrome b6-f complex, which mediates electron transfer between photosystem II (PSII) and photosystem I (PSI), cyclic electron flow around PSI, and state transitions. The protein is Cytochrome b6 of Cyanothece sp. (strain PCC 7425 / ATCC 29141).